Reading from the N-terminus, the 474-residue chain is Probable phenylalanine--tRNA ligase alpha subunit (474 aa).

Residues 1-150 (MSLSQKILEL…KRKLIYQAKE (150 aa)) are contains the major tRNA-Phe binding sites. L-phenylalanine is bound by residues threonine 308, 350-352 (QVE), and tyrosine 390. Glutamate 392 is a Mg(2+) binding site. Phenylalanine 416 is an L-phenylalanine binding site.

It belongs to the class-II aminoacyl-tRNA synthetase family. Phe-tRNA synthetase alpha subunit type 2 subfamily. Tetramer of two alpha and two beta subunits. Mg(2+) serves as cofactor.

The protein resides in the cytoplasm. It carries out the reaction tRNA(Phe) + L-phenylalanine + ATP = L-phenylalanyl-tRNA(Phe) + AMP + diphosphate + H(+). This Vairimorpha ceranae (strain BRL01) (Microsporidian parasite) protein is Probable phenylalanine--tRNA ligase alpha subunit.